The primary structure comprises 242 residues: MAFGPAAMGYDRAITIFSPDGSLYQVDYAFEAVKKGWTTLGVKTKAGVVLIGEKRKATQLLDVDSIEKVFILDDHVGCSFAGLASDGRILIDYARSQALQHRLIYDEPINIDYLTKLVSDVKQMYTQHGGVRPFGVALIIGGIDRGKTPKLLMTEPSGQFMPYYAVAIGQGGYTATEYFEKNYREDLNMQDTILLGIRALASTLKPGEKLAPSNIEVGFADVDSGMFRKMSFEERASILQKL.

Belongs to the peptidase T1A family. The 20S proteasome core is composed of 14 alpha and 14 beta subunits that assemble into four stacked heptameric rings, resulting in a barrel-shaped structure. The two inner rings, each composed of seven catalytic beta subunits, are sandwiched by two outer rings, each composed of seven alpha subunits. The catalytic chamber with the active sites is on the inside of the barrel. Has a gated structure, the ends of the cylinder being occluded by the N-termini of the alpha-subunits. Is capped at one or both ends by the proteasome regulatory ATPase, PAN.

The protein localises to the cytoplasm. With respect to regulation, the formation of the proteasomal ATPase PAN-20S proteasome complex, via the docking of the C-termini of PAN into the intersubunit pockets in the alpha-rings, triggers opening of the gate for substrate entry. Interconversion between the open-gate and close-gate conformations leads to a dynamic regulation of the 20S proteasome proteolysis activity. Component of the proteasome core, a large protease complex with broad specificity involved in protein degradation. This is Proteasome subunit alpha from Sulfurisphaera tokodaii (strain DSM 16993 / JCM 10545 / NBRC 100140 / 7) (Sulfolobus tokodaii).